A 217-amino-acid chain; its full sequence is Adenylate kinase (217 aa).

An ATP-binding site is contributed by 10-15 (GAGKGT). The interval 30–59 (STGDIFRSNVSQGTPLGVQAKRYMDAGELV) is NMP. AMP is bound by residues T31, R36, 57–59 (ELV), 85–88 (GFPR), and Q92. The interval 126–163 (GRRTCRGCGKVWHVEFDAPSQEGRCDRCGAELFQRDDD) is LID. R127 serves as a coordination point for ATP. Residues C130, C133, C150, and C153 each coordinate Zn(2+). Positions 160 and 171 each coordinate AMP. G199 serves as a coordination point for ATP.

Belongs to the adenylate kinase family. In terms of assembly, monomer.

The protein localises to the cytoplasm. The catalysed reaction is AMP + ATP = 2 ADP. The protein operates within purine metabolism; AMP biosynthesis via salvage pathway; AMP from ADP: step 1/1. Functionally, catalyzes the reversible transfer of the terminal phosphate group between ATP and AMP. Plays an important role in cellular energy homeostasis and in adenine nucleotide metabolism. This is Adenylate kinase from Salinispora tropica (strain ATCC BAA-916 / DSM 44818 / JCM 13857 / NBRC 105044 / CNB-440).